Reading from the N-terminus, the 458-residue chain is MERSLKNVLVVSCGFLLLFTAYGGLQNLQSSLYSEQGLGVATLSTLYASVLLSSMFLPPILIKKCGCKWTIVGSMCCYVVFSLGNFHANWYTLIPTSILLGLGAAPLWSAQGTYLTTMGNLQAEKVGKLGKDVVNQYFGIFFLVFQSSGVWGNLISSLVFGKMSMQEAIPEEQLMSCGAKDCLMGPAATNSTHHPSQQLIYTLLGIYTGCGVLAILLVAVFLESLEDKLENEGERRPRPPPLWSTLLSTFMLFRDKRLCLLMFLPLYSGFQQEFLSGEYTKSYVTCALGIHFVGYVMICFSAMTALCSLLYGKISKYTGRAALYALGAAIHFSCIVVFLLWHPNTNQLPVFFVLSGLWGMSDAVWQTQNNALFGVLFEENKEPAFANYRLGEAIGFVIAFGYSSFLCVSTKLYILLGVLSLAMVGYGTVEYLEVKAASKVLGAEKKNQAEEEEMKTKI.

The next 5 helical transmembrane spans lie at Val-8–Leu-28, Thr-42–Ile-62, Trp-69–Asn-89, Trp-90–Ala-110, and Ile-140–Phe-160. N-linked (GlcNAc...) asparagine glycosylation is present at Asn-190. The next 7 helical transmembrane spans lie at Thr-202–Leu-222, Leu-258–Leu-275, Cys-286–Leu-306, Ala-321–Trp-341, Thr-345–Trp-365, Leu-390–Thr-410, and Leu-412–Leu-432.

Belongs to the unc-93 family.

It localises to the cell membrane. The protein is Protein unc-93 homolog A (Unc93a) of Mus musculus (Mouse).